A 643-amino-acid chain; its full sequence is Thioredoxin reductase 3 (643 aa).

The segment at 1–53 (MERSPPQSPGPGKAGDAPNRRSGHVRGARVLSPPGRRARLSSPGPSRSSEARE) is disordered. Arginine 26 carries the asymmetric dimethylarginine; alternate modification. Omega-N-methylarginine; alternate is present on arginine 26. A phosphoserine mark is found at serine 41 and serine 42. A Glutaredoxin domain is found at 56–156 (RRHLVGLIER…KLLQEDLAYD (101 aa)). 158–187 (DLIIIGGGSGGLSCAKEAAILGKKVMVLDF) lines the FAD pocket. Cysteine 203 and cysteine 208 are disulfide-bonded. Lysine 379 is modified (N6-succinyllysine). Histidine 616 acts as the Proton acceptor in catalysis. Positions 641–642 (CU) form a cross-link, cysteinyl-selenocysteine (Cys-Sec). Position 642 (selenocysteine 642) is a non-standard amino acid, selenocysteine.

This sequence belongs to the class-I pyridine nucleotide-disulfide oxidoreductase family. As to quaternary structure, homodimer. Requires FAD as cofactor.

The protein localises to the cytoplasm. It is found in the nucleus. Its subcellular location is the microsome. It localises to the endoplasmic reticulum. It catalyses the reaction [thioredoxin]-dithiol + NADP(+) = [thioredoxin]-disulfide + NADPH + H(+). Functionally, displays thioredoxin reductase, glutaredoxin and glutathione reductase activities. Catalyzes disulfide bond isomerization. Promotes disulfide bond formation between GPX4 and various sperm proteins and may play a role in sperm maturation by promoting formation of sperm structural components. In Homo sapiens (Human), this protein is Thioredoxin reductase 3.